The sequence spans 651 residues: Acetyl-coenzyme A synthetase (651 aa).

CoA is bound by residues 189 to 192 (RGGK), threonine 311, and asparagine 335. ATP contacts are provided by residues 387–389 (GEP), 411–416 (DTWWQT), aspartate 500, and arginine 515. Residue serine 523 coordinates CoA. Residue arginine 526 participates in ATP binding. Residues valine 537, histidine 539, and valine 542 each coordinate Mg(2+). Arginine 586 lines the CoA pocket. Lysine 611 bears the N6-acetyllysine mark.

Belongs to the ATP-dependent AMP-binding enzyme family. The cofactor is Mg(2+). Post-translationally, acetylated. Deacetylation by the SIR2-homolog deacetylase activates the enzyme.

It carries out the reaction acetate + ATP + CoA = acetyl-CoA + AMP + diphosphate. Functionally, catalyzes the conversion of acetate into acetyl-CoA (AcCoA), an essential intermediate at the junction of anabolic and catabolic pathways. AcsA undergoes a two-step reaction. In the first half reaction, AcsA combines acetate with ATP to form acetyl-adenylate (AcAMP) intermediate. In the second half reaction, it can then transfer the acetyl group from AcAMP to the sulfhydryl group of CoA, forming the product AcCoA. The sequence is that of Acetyl-coenzyme A synthetase from Brucella melitensis biotype 2 (strain ATCC 23457).